Here is a 228-residue protein sequence, read N- to C-terminus: Protein ARV 2 (228 aa).

2 helical membrane passes run 37–57 (EVADEYVECELLIIFIDLILH) and 80–100 (LLWKLVLAYLLLDTYRSLLLR). Asn107 carries N-linked (GlcNAc...) asparagine glycosylation. 3 helical membrane-spanning segments follow: residues 123-143 (VLSANFAFVFSFAFAAKLMLV), 150-170 (ILLTILISSYVKIFLFAMPVW), and 176-196 (VIFIVDMLVLTSNAVALKVMT).

Belongs to the ARV1 family. Restricted to tissues in which cells are actively dividing or expanding. Mostly expressed in roots and flowers, and, to a lower extent, in stems and leaves.

The protein resides in the endoplasmic reticulum membrane. Its function is as follows. Mediator of sterol homeostasis involved in sterol uptake, trafficking and distribution into membranes. Also regulates the sphingolipid metabolism. The sequence is that of Protein ARV 2 from Arabidopsis thaliana (Mouse-ear cress).